The primary structure comprises 178 residues: Oligoribonuclease (178 aa).

The Exonuclease domain maps to 7-168 (LIWIDLEMTG…DDIRESIAEL (162 aa)). Tyr-128 is a catalytic residue.

The protein belongs to the oligoribonuclease family.

The protein localises to the cytoplasm. 3'-to-5' exoribonuclease specific for small oligoribonucleotides. This Francisella tularensis subsp. holarctica (strain OSU18) protein is Oligoribonuclease.